A 351-amino-acid polypeptide reads, in one-letter code: Photosystem II D2 protein (351 aa).

A helical transmembrane segment spans residues 39–59 (CSYLALGAWFTGTTFVTSWYT). Position 116 (histidine 116) interacts with chlorophyll a. Residues 123-139 (GFCLRQFEIARLVGLRP) form a helical membrane-spanning segment. Pheophytin a contacts are provided by glutamine 128 and asparagine 141. Residues 151-164 (VFVSVFLLYPLGQA) traverse the membrane as a helical segment. Histidine 196 is a binding site for chlorophyll a. The helical transmembrane segment at 206 to 226 (GALLCAIHGATVQNTLFEDGE) threads the bilayer. Histidine 213 and phenylalanine 260 together coordinate a plastoquinone. Fe cation is bound at residue histidine 213. Histidine 267 contacts Fe cation. A helical transmembrane segment spans residues 277–293 (GLWASSIGIVGLALNLR).

Belongs to the reaction center PufL/M/PsbA/D family. PSII is composed of 1 copy each of membrane proteins PsbA, PsbB, PsbC, PsbD, PsbE, PsbF, PsbH, PsbI, PsbJ, PsbK, PsbL, PsbM, PsbT, PsbX, PsbY, PsbZ, Psb30/Ycf12, at least 3 peripheral proteins of the oxygen-evolving complex and a large number of cofactors. It forms dimeric complexes. Requires The D1/D2 heterodimer binds P680, chlorophylls that are the primary electron donor of PSII, and subsequent electron acceptors. It shares a non-heme iron and each subunit binds pheophytin, quinone, additional chlorophylls, carotenoids and lipids. There is also a Cl(-1) ion associated with D1 and D2, which is required for oxygen evolution. The PSII complex binds additional chlorophylls, carotenoids and specific lipids. as cofactor.

It localises to the plastid. Its subcellular location is the chloroplast thylakoid membrane. It catalyses the reaction 2 a plastoquinone + 4 hnu + 2 H2O = 2 a plastoquinol + O2. Its function is as follows. Photosystem II (PSII) is a light-driven water:plastoquinone oxidoreductase that uses light energy to abstract electrons from H(2)O, generating O(2) and a proton gradient subsequently used for ATP formation. It consists of a core antenna complex that captures photons, and an electron transfer chain that converts photonic excitation into a charge separation. The D1/D2 (PsbA/PsbD) reaction center heterodimer binds P680, the primary electron donor of PSII as well as several subsequent electron acceptors. D2 is needed for assembly of a stable PSII complex. In Cyanidioschyzon merolae (strain NIES-3377 / 10D) (Unicellular red alga), this protein is Photosystem II D2 protein.